A 467-amino-acid polypeptide reads, in one-letter code: MAPQLLLCLILTFLWSLPEAESNVFLKSKVANRFLQRTKRANSLFEEFRSGNIERECIEERCSKEEAREVFEDDEKTETFWNVYVDGDQCSSNPCHYRGTCKDGIGSYTCTCLFGYEGKNCERVLYKSCRVDNGNCWHFCKPVQNDIQCSCAEGYLLGEDGHSCVAGGNFSCGRNIKTRNKREASLPDFVQSQNATLLKKSDNPSPDIRIVNGMDCKLGECPWQAVLVDEKEGVFCGGTILSPIYVLTAAHCINQTEKISVVVGEIDKSRVETGHLLSVDKIYVHKKFVPPKKGYKFYEKFDLVSYDYDIAIIQMKTPIQFSENVVPACLPTADFANQVLMKQDFGIISGFGRIFEKGPKSNTLKVLKVPYVDRHTCMVSSESPITPTMFCAGYDTLPRDACQGDSGGPHITAYRDTHFITGIVSWGEGCAKKGKYGIYTKVSKFILWIKRIMRQKLPSTESSTGRL.

Residues 1–20 (MAPQLLLCLILTFLWSLPEA) form the signal peptide. The propeptide occupies 21-40 (ESNVFLKSKVANRFLQRTKR). The region spanning 41-86 (ANSLFEEFRSGNIERECIEERCSKEEAREVFEDDEKTETFWNVYVD) is the Gla domain. Glutamate 46, glutamate 47, glutamate 54, glutamate 56, glutamate 59, glutamate 60, glutamate 65, glutamate 66, glutamate 69, glutamate 72, and glutamate 75 each carry 4-carboxyglutamate. Cysteines 57 and 62 form a disulfide. In terms of domain architecture, EGF-like 1; calcium-binding spans 86–122 (DGDQCSSNPCHYRGTCKDGIGSYTCTCLFGYEGKNCE). Disulfide bonds link cysteine 90–cysteine 101, cysteine 95–cysteine 110, cysteine 112–cysteine 121, cysteine 129–cysteine 140, cysteine 136–cysteine 149, cysteine 151–cysteine 164, cysteine 172–cysteine 329, cysteine 216–cysteine 221, cysteine 236–cysteine 252, cysteine 377–cysteine 391, and cysteine 402–cysteine 430. O-linked (Hex...) serine glycosylation occurs at serine 92. The EGF-like 2 domain maps to 129–164 (CRVDNGNCWHFCKPVQNDIQCSCAEGYLLGEDGHSC). Residues 182–209 (REASLPDFVQSQNATLLKKSDNPSPDIR) constitute a propeptide, activation peptide. Positions 210–454 (IVNGMDCKLG…FILWIKRIMR (245 aa)) constitute a Peptidase S1 domain. Histidine 251 acts as the Charge relay system in catalysis. The N-linked (GlcNAc...) asparagine glycan is linked to asparagine 254. Aspartate 309 (charge relay system) is an active-site residue. The active-site Charge relay system is serine 406.

Belongs to the peptidase S1 family. Snake venom subfamily. In terms of assembly, heterodimer of a light and a heavy chains; disulfide-linked. Is associated with omicarin-C non-catalytic subunit (AC Q58L90) in a non-covalent manner. In terms of processing, gamma-carboxyglutamate residues are formed by vitamin K dependent carboxylation. These residues are essential for the binding of calcium. Expressed by the venom gland.

The protein localises to the secreted. It carries out the reaction Selective cleavage of Arg-|-Thr and then Arg-|-Ile bonds in prothrombin to form thrombin.. Activated by calcium and negatively charged phospholipids. Snake prothrombin activator that attacks the hemostatic system of prey. This catalytic subunit is functionally similar to blood coagulation factor Xa. It requires a non-catalytic subunit present in the venom, which is similar to coagulation factor Va, to be fully active. The protein is Venom prothrombin activator omicarin-C catalytic subunit of Oxyuranus microlepidotus (Inland taipan).